Reading from the N-terminus, the 212-residue chain is Ribosomal RNA small subunit methyltransferase G (212 aa).

S-adenosyl-L-methionine contacts are provided by residues G76, M81, V127–E128, and R145.

It belongs to the methyltransferase superfamily. RNA methyltransferase RsmG family.

Its subcellular location is the cytoplasm. The enzyme catalyses guanosine(527) in 16S rRNA + S-adenosyl-L-methionine = N(7)-methylguanosine(527) in 16S rRNA + S-adenosyl-L-homocysteine. Its function is as follows. Specifically methylates the N7 position of guanine in position 527 of 16S rRNA. This Acinetobacter baylyi (strain ATCC 33305 / BD413 / ADP1) protein is Ribosomal RNA small subunit methyltransferase G.